Reading from the N-terminus, the 208-residue chain is Protein JLP2 (208 aa).

Positions 185–194 (AKKNQKKKNK) are enriched in basic residues. Residues 185–208 (AKKNQKKKNKQSKDEVTDDMQLEV) are disordered.

The protein belongs to the CCDC25 family.

Its subcellular location is the cytoplasm. The sequence is that of Protein JLP2 (JLP2) from Saccharomyces cerevisiae (strain ATCC 204508 / S288c) (Baker's yeast).